The sequence spans 616 residues: Dihydroxy-acid dehydratase (616 aa).

Position 81 (Asp-81) interacts with Mg(2+). Cys-122 serves as a coordination point for [2Fe-2S] cluster. The Mg(2+) site is built by Asp-123 and Lys-124. Position 124 is an N6-carboxylysine (Lys-124). [2Fe-2S] cluster is bound at residue Cys-195. Glu-491 provides a ligand contact to Mg(2+). Ser-517 acts as the Proton acceptor in catalysis.

The protein belongs to the IlvD/Edd family. Homodimer. It depends on [2Fe-2S] cluster as a cofactor. Requires Mg(2+) as cofactor.

The enzyme catalyses (2R)-2,3-dihydroxy-3-methylbutanoate = 3-methyl-2-oxobutanoate + H2O. The catalysed reaction is (2R,3R)-2,3-dihydroxy-3-methylpentanoate = (S)-3-methyl-2-oxopentanoate + H2O. Its pathway is amino-acid biosynthesis; L-isoleucine biosynthesis; L-isoleucine from 2-oxobutanoate: step 3/4. It functions in the pathway amino-acid biosynthesis; L-valine biosynthesis; L-valine from pyruvate: step 3/4. Its function is as follows. Functions in the biosynthesis of branched-chain amino acids. Catalyzes the dehydration of (2R,3R)-2,3-dihydroxy-3-methylpentanoate (2,3-dihydroxy-3-methylvalerate) into 2-oxo-3-methylpentanoate (2-oxo-3-methylvalerate) and of (2R)-2,3-dihydroxy-3-methylbutanoate (2,3-dihydroxyisovalerate) into 2-oxo-3-methylbutanoate (2-oxoisovalerate), the penultimate precursor to L-isoleucine and L-valine, respectively. The sequence is that of Dihydroxy-acid dehydratase from Escherichia coli O9:H4 (strain HS).